Reading from the N-terminus, the 1145-residue chain is Probable ATP-dependent RNA helicase DHX34 (1145 aa).

The segment covering 1 to 14 (MPPPRTREGRGHRD) has biased composition (basic and acidic residues). A disordered region spans residues 1 to 27 (MPPPRTREGRGHRDRDHHRAPREEEAP). One can recognise a Helicase ATP-binding domain in the interval 174-334 (LQTLKEHQVV…FSHAPVVQVP (161 aa)). 187-194 (GDTGCGKS) contacts ATP. The DEAH box motif lies at 281-284 (DEVH). In terms of domain architecture, Helicase C-terminal spans 370 to 538 (AIDNKYPPEE…ALVLQMKSMS (169 aa)). Disordered stretches follow at residues 726–764 (LKRQHEEGGGRRRKVLRLQEDGCSSDEEDRKGSTSQRAD) and 1091–1114 (NTCPEAPGDDPGSEEAAPAPPQKT). Phosphoserine occurs at positions 749 and 750.

It belongs to the DEAD box helicase family. DEAH subfamily. Forms a complex with RUVBL1 and RUVBL2. Part of a complex composed of SMG1, DHX34 and UPF1; within the complex DHX34 acts as a scaffolding protein to facilitate SMG1 phosphorylation of UPF1. Interacts with UPF1, MOV10, EIF4A3, XRN2, SMG6, SMG7, SMG9, UPF3A, UPF3B, CASC3/MLN51, XRN1, DIS3 and DCP1A; the interactions are RNA-independent. Interacts with NCBP1/CPB80; the interaction is RNA-dependent. Interacts (via C-terminus) with SMG1; the interaction is RNA-independent.

It catalyses the reaction ATP + H2O = ADP + phosphate + H(+). Functionally, probable ATP-binding RNA helicase. Required for nonsense-mediated decay (NMD) degradation of mRNA transcripts containing premature stop codons. Promotes the phosphorylation of UPF1 along with its interaction with key NMD pathway proteins UPF2 and EIF4A3. Negatively regulates the nucleotide binding ability and ATP hydrolysis of the RUVBL1-RUVBL2 complex via induction of N-terminus conformation changes of the RUVBL2 subunits. This Mus musculus (Mouse) protein is Probable ATP-dependent RNA helicase DHX34.